The chain runs to 1704 residues: ABC transporter ced-7 (1704 aa).

The helical transmembrane segment at 23–43 (VWTLFELIIPCLLLGPLVYLV) threads the bilayer. Asn126 and Asn145 each carry an N-linked (GlcNAc...) asparagine glycan. The next 3 helical transmembrane spans lie at 256-276 (AFID…VIHI), 306-326 (VVMA…PLTF), and 334-354 (AALI…GAFV). N-linked (GlcNAc...) asparagine glycosylation occurs at Asn359. The next 2 helical transmembrane spans lie at 362–382 (NSAI…SYKL) and 389–409 (ISSC…AVEA). Asn421 and Asn427 each carry an N-linked (GlcNAc...) asparagine glycan. The chain crosses the membrane as a helical span at residues 436–456 (GWALVMMIVDILWMSIGALVV). Asn481 carries N-linked (GlcNAc...) asparagine glycosylation. The tract at residues 511–536 (NPMASTSLNPPNADSDSLLEGSTEAD) is disordered. Positions 512 to 525 (PMASTSLNPPNADS) are enriched in polar residues. The region spanning 546 to 777 (IIVRNLVKIW…FGTGYLLTVV (232 aa)) is the ABC transporter 1 domain. 580 to 587 (GHNGAGKS) is a binding site for ATP. N-linked (GlcNAc...) asparagine glycans are attached at residues Asn678, Asn727, and Asn899. Composition is skewed to polar residues over residues 888-902 (RQNS…NASE) and 911-921 (DTQSSTKSADS). Positions 888 to 933 (RQNSRISHNSRNASEPSLKPAGYDTQSSTKSADSYQKLMDSQARGP) are disordered. The chain crosses the membrane as a helical span at residues 963–983 (LFTQVLIPIILLGLVGSLTTL). N-linked (GlcNAc...) asparagine glycans are attached at residues Asn986, Asn1012, and Asn1045. 7 consecutive transmembrane segments (helical) span residues 1126-1146 (LAPM…MFLI), 1153-1173 (FAHQ…ASLI), 1176-1196 (GILY…FHWM), 1201-1221 (AIVI…IYAV), 1234-1254 (LLII…FLIF), 1266-1286 (ILVN…AIIT), and 1311-1331 (LMGT…FKFV). In terms of domain architecture, ABC transporter 2 spans 1379–1603 (LVIKDLTKTF…YGNNYTMTLS (225 aa)). 1411 to 1418 (GVNGAGKT) provides a ligand contact to ATP. Asn1597 and Asn1632 each carry an N-linked (GlcNAc...) asparagine glycan.

The protein belongs to the ABC transporter superfamily. ABCA family. As to expression, ubiquitous in embryos. Expressed in larval germline precursors. Expression in larvae and adults is seen in amphid sheath cells, pharyngeal-intestinal valve and phasmid sheath cells. Low levels of expression are also seen in gonadal sheath cells.

It localises to the membrane. Functions in the engulfment of cell corpses during embryonic programmed cell death to translocate molecules that mediate homotypic adhesion between cell surfaces of the dying and engulfing cells. The sequence is that of ABC transporter ced-7 (ced-7) from Caenorhabditis elegans.